Here is a 450-residue protein sequence, read N- to C-terminus: Sorting nexin-4 (450 aa).

M1 carries the N-acetylmethionine modification. Positions 1 to 46 (MEQAPPDPERQLQPAPLEPLGSPDAGLGAAVGKEAEGAGEESSGVD) are disordered. Phosphoserine is present on S22. The 127-residue stretch at 61 to 187 (SVSEAEKRTG…YLFLTQEGNW (127 aa)) folds into the PX domain. A 1,2-diacyl-sn-glycero-3-phospho-(1D-myo-inositol-3-phosphate) is bound by residues R106, S108, K132, and R154.

The protein belongs to the sorting nexin family. Heterodimer; heterodimerizes with SNX7 or SNX30. Interacts with WWC1/KIBRA. Identified in a complex with WWC1/KIBRA and dynein components DYNLL1 and DYNC1I2. Interacts with BIN1.

It is found in the early endosome membrane. Involved in the regulation of endocytosis and in several stages of intracellular trafficking. Plays a role in recycling endocytosed transferrin receptor and prevent its degradation. Involved in autophagosome assembly by regulating trafficking and recycling of phospholipid scramblase ATG9A. This chain is Sorting nexin-4, found in Homo sapiens (Human).